A 227-amino-acid polypeptide reads, in one-letter code: Probable N-acetyltransferase family 8 member 5 (227 aa).

Helical transmembrane passes span 29 to 49, 53 to 73, and 201 to 221; these read IPAA…LFVM, IVLV…LLLL, and ISII…SFPS. An N-acetyltransferase domain is found at 69 to 213; that stretch reads FLLLLLRLLA…IKWLITFSII (145 aa).

This sequence belongs to the camello family.

The protein localises to the membrane. In terms of biological role, may play a role in regulation of gastrulation. This is Probable N-acetyltransferase family 8 member 5 from Mus musculus (Mouse).